A 311-amino-acid polypeptide reads, in one-letter code: Ferritin-like catalase Nec2 (311 aa).

Residues Met-1 to Ser-25 form the signal peptide. N-linked (GlcNAc...) asparagine glycosylation is found at Asn-128, Asn-257, and Asn-289.

As to quaternary structure, forms homomultimers. Observed in all flowers organs; mainly expressed in nectaries and, to a lower extent, in petals and ovules, as well as in stigmas and calyx at low levels.

The enzyme catalyses 2 H2O2 = O2 + 2 H2O. Functionally, involved in the production of blood-red nectar containing the alkaloid nesocodin and that serves as a visual attractant for pollinator visitation, including vertebrates such as Phelsuma geckos. The nectar is initially acidic and pale yellow, but slowly becomes alkaline before turning into red within 24 hours. Together with NEC1 and NEC3, facilitates the condensation of sinapaldehyde ((E)-3,5-dimethoxy-4-hydroxycinnamaldehyde) and proline to form nesocodin, a pigment with a stable imine bond. Protects nesocodin from degradation by hydrogen peroxide H(2)O(2) by catalyzing the degradation of H(2)O(2) into water H(2)O and dioxygene O(2). This Nesocodon mauritianus (Blue Mauritius bellflower) protein is Ferritin-like catalase Nec2.